Here is a 240-residue protein sequence, read N- to C-terminus: Type II restriction enzyme DdeI (240 aa).

It carries out the reaction Endonucleolytic cleavage of DNA to give specific double-stranded fragments with terminal 5'-phosphates.. A P subtype restriction enzyme that recognizes the double-stranded sequence 5'-CTNAG-3' and cleaves after C-1. The polypeptide is Type II restriction enzyme DdeI (ddeIR) (Desulfomicrobium norvegicum (strain DSM 1741 / NCIMB 8310) (Desulfovibrio baculatus (strain Norway 4))).